The following is a 212-amino-acid chain: MKRSIVKNASLLGLFALLCTALVALVNQFTFERIKQQQDLELMRTLHQIIPDEMHDNALIEHCILIQDADVLGIDEPLPAYIASQGGEPVAIAMETVAPDGYNGQIKLIVAIDAKGEVLGVRTLNHNETPGLGDKIDLRKSSWVLGFKGQSIQGEQDKRWAVKKDGGQFDQFTGATITPRAYVGAVKRTLAYFNANQQTLLNRPANCEVQYE.

A helical transmembrane segment spans residues 9-29; it reads ASLLGLFALLCTALVALVNQF. Residue T176 is modified to FMN phosphoryl threonine.

The protein belongs to the RnfG family. As to quaternary structure, the complex is composed of six subunits: RnfA, RnfB, RnfC, RnfD, RnfE and RnfG. The cofactor is FMN.

The protein localises to the cell inner membrane. Its function is as follows. Part of a membrane-bound complex that couples electron transfer with translocation of ions across the membrane. The polypeptide is Ion-translocating oxidoreductase complex subunit G (Shewanella loihica (strain ATCC BAA-1088 / PV-4)).